The chain runs to 422 residues: uncharacterized protein (422 aa).

Disordered regions lie at residues 1-21 (MRDNIAKGITAGSNTQQTTYD), 158-218 (TAKS…TEQV), and 246-271 (DFGTAPSSSGSGTQDGTPTPWTPWLT). Over residues 11–21 (AGSNTQQTTYD) the composition is skewed to polar residues. The segment covering 170 to 199 (SKSSNGSSSTSTTQRGGSSNENKVKALQVA) has biased composition (low complexity). Polar residues-rich tracts occupy residues 205–216 (GSQGNSGDQGTE) and 250–261 (APSSSGSGTQDG). Over residues 262-271 (TPTPWTPWLT) the composition is skewed to low complexity.

This sequence belongs to the adhesin P1 family.

This is an uncharacterized protein from Mycoplasma pneumoniae (strain ATCC 29342 / M129 / Subtype 1) (Mycoplasmoides pneumoniae).